A 345-amino-acid polypeptide reads, in one-letter code: Protein Tob1 (345 aa).

The short motif at 22–39 (RRRVNIFGEELERLLKKK) is the Bipartite nuclear localization signal element. The important for nuclear localization stretch occupies residues 82–92 (VRGNLPQDLSV). A compositionally biased stretch (low complexity) spans 144 to 160 (DPASSVSSSPSPPFGHS). The disordered stretch occupies residues 144–171 (DPASSVSSSPSPPFGHSAAVSPTFMPRS). The interval 161 to 218 (AAVSPTFMPRSTQPLTFTTATFAATKFGSTKMKNSGRSNKVARTSPINLGLNVNDLLK) is required for interaction with CPEB3. Phosphothreonine is present on Thr204. The Nuclear export signal signature appears at 226–234 (MHSLYGLGL). The segment at 231-267 (GLGLGSQQQPQQQQQPAQPPPPPPPPQQQQQQKTSAL) is disordered. Over residues 237–246 (QQQPQQQQQP) the composition is skewed to low complexity. The span at 247 to 257 (AQPPPPPPPPQ) shows a compositional bias: pro residues.

The protein belongs to the BTG family. As to quaternary structure, interacts with ERBB2. Interacts with CNOT7. Interacts with CPEB3 (via C-terminal RNA-binding region); recruits CNOT7 to CPEB3 to form a ternary complex required for mRNA deadenylation and decay. Interacts with CNOT8. Interacts with CPEB4. In terms of processing, phosphorylated on Ser and Thr residues. As to expression, ubiquitous.

The protein localises to the cytoplasm. It is found in the nucleus. In terms of biological role, anti-proliferative protein; the function is mediated by association with deadenylase subunits of the CCR4-NOT complex. Mediates CPEB3-accelerated mRNA deadenylation by binding to CPEB3 and recruiting CNOT7 which leads to target mRNA deadenylation and decay. The sequence is that of Protein Tob1 (TOB1) from Homo sapiens (Human).